The following is a 429-amino-acid chain: MFVDQVKIYVKAGNGGDGMVAFRREKFVPNGGPAGGDGGKGADVVFVVDEGLRTLVDFRFKRIFKAEHGDHGMSKSMHGRGAEDLVVKVPQGTIVKDIDTGEIIADLVAHGQRAVIAKAGRGGRGNKRFATPANPAPELSENGEPGQERNVQLELKVLADVGLVGFPSVGKSTLLSVVSAARPKIAAYHFTTIVPNLGMVDAGDGRSFVMADLPGLIEGASQGVGLGHQFLRHIERTRVIVHVIDMSGSEGRVPYEDYMAINNELEQYNLRLMERPQIIVANKMDMPDAEENLKEFKTKIAEDIPVFPISAVTKTGLRELLLAIADKLETTPEFPLNEILEQEDEDTVLYKYVAEEPDFEITREPDGTFVLSGAKIERLFTMTNFERDASISRFARQLRAMGVDEALRKRGAKDGDIVRLLDYEFEFMD.

An Obg domain is found at Met1–Leu158. The segment at Arg124–Pro145 is disordered. An OBG-type G domain is found at Ala159–Glu329. Residues Gly165 to Ser172, Phe190 to Val194, Asp212 to Gly215, Asn282 to Asp285, and Ser310 to Val312 contribute to the GTP site. Residues Ser172 and Thr192 each coordinate Mg(2+). Residues Lys351 to Asp429 form the OCT domain.

Belongs to the TRAFAC class OBG-HflX-like GTPase superfamily. OBG GTPase family. Monomer. Mg(2+) is required as a cofactor.

It is found in the cytoplasm. An essential GTPase which binds GTP, GDP and possibly (p)ppGpp with moderate affinity, with high nucleotide exchange rates and a fairly low GTP hydrolysis rate. Plays a role in control of the cell cycle, stress response, ribosome biogenesis and in those bacteria that undergo differentiation, in morphogenesis control. The polypeptide is GTPase Obg (Listeria innocua serovar 6a (strain ATCC BAA-680 / CLIP 11262)).